A 304-amino-acid chain; its full sequence is Secreted mono- and diacylglycerol lipase MDL4 (304 aa).

Residues 1–19 (MRFGGVVSLVLGFIVSVLA) form the signal peptide. An intrachain disulfide couples cysteine 55 to cysteine 297. 2 N-linked (GlcNAc...) asparagine glycosylation sites follow: asparagine 102 and asparagine 161. The active-site Nucleophile is serine 171. Aspartate 228 is a catalytic residue. A glycan (N-linked (GlcNAc...) asparagine) is linked at asparagine 253. Histidine 281 is a catalytic residue.

It belongs to the AB hydrolase superfamily. Lipase family. Class 3 subfamily.

Its subcellular location is the secreted. The protein resides in the cell wall. The catalysed reaction is a monoacylglycerol + H2O = glycerol + a fatty acid + H(+). It catalyses the reaction a diacylglycerol + H2O = a monoacylglycerol + a fatty acid + H(+). In terms of biological role, secreted lipase involved in Dandruff and seborrheic dermatitis (D/SD) probably via lipase-mediated breakdown of sebaceous lipids and release of irritating free fatty acids. Shows activity against monoglyceride and diglyceride substrates, but not triglyceride substrates and does not exhibit regio-selective production of diacylglycerols. Cleaves oleic acid from 1,2 isomers of diolein on both the 1 and the 2 position of the glycerol backbone, resulting mainly in free fatty acids but no monoolein is detected. Shows activity on monoolein and liberates mostly free fatty acids, but can also perform the reverse reaction and produce diolein. This Malassezia globosa (strain ATCC MYA-4612 / CBS 7966) (Dandruff-associated fungus) protein is Secreted mono- and diacylglycerol lipase MDL4.